The primary structure comprises 572 residues: Putative inorganic phosphate transporter C8E4.01c (572 aa).

The Cytoplasmic segment spans residues 1 to 47 (MAFGSKILNIGSKSDEYNDDAVPLDQVEEGAQERRYYLGLTKREFKL). A phosphoserine mark is found at Ser12 and Ser14. A helical transmembrane segment spans residues 48–68 (MMLAGVGFFLDSYDLFIINLV). The Extracellular segment spans residues 69 to 99 (TPIFEYLYWGGIEKGPTGKGHYPSGIRGLVN). A helical membrane pass occupies residues 100-120 (ASANIGNIFGQLLFGFMGDFF). Topologically, residues 121 to 123 (GRK) are cytoplasmic. Residues 124-144 (FVYGKEMVIVIIATVLVIAMP) traverse the membrane as a helical segment. Topologically, residues 145-153 (KSIHSPLSK) are extracellular. Residues 154-174 (MMWVFCWRWLLGVGIGGDYPM) traverse the membrane as a helical segment. Residues 175-193 (SAAITSERSKIKRRGTLIS) are Cytoplasmic-facing. A helical membrane pass occupies residues 194–214 (LIFAFQGFGTLAGAIVTIILL). Over 215–229 (GCFEHPLNREGHYHK) the chain is Extracellular. The helical transmembrane segment at 230–250 (LEGVWRLQFGLALVPAIGVLI) threads the bilayer. Topologically, residues 251–346 (PRLIMKESKS…TYFRQWRHFK (96 aa)) are cytoplasmic. Residues 265–297 (KALNSAEGKDPKAFFNTDDEDNMKKSSSHGDSE) form a disordered region. Residues 286 to 296 (NMKKSSSHGDS) are compositionally biased toward basic and acidic residues. 2 positions are modified to phosphoserine: Ser292 and Ser296. Residues 347–367 (HLLGTSVCWFLLDIAFYGVNL) traverse the membrane as a helical segment. Residues 368–395 (NQSVILKNIGFSTGTNEYRTLMKNAIGN) are Extracellular-facing. The helical transmembrane segment at 396–416 (LIIAVAGYVPGYWFNVFLVEI) threads the bilayer. Topologically, residues 417–420 (LGRK) are cytoplasmic. Residues 421 to 441 (WIQLQGFVITGLMFAILAGRW) traverse the membrane as a helical segment. Residues 442–449 (NEISTGGR) lie on the Extracellular side of the membrane. The chain crosses the membrane as a helical span at residues 450 to 470 (FACFVIAQLFSNFGPNSTTFI). The Cytoplasmic segment spans residues 471–485 (YPAEVFPARVRGTAH). The chain crosses the membrane as a helical span at residues 486 to 506 (GVSAALGKCGAILASLLFNFL). At 507 to 508 (TG) the chain is on the extracellular side. A helical membrane pass occupies residues 509–529 (VIGYGNVMWIFCGCMWGGILF). Topologically, residues 530–572 (TLLLPETKGRDADEIDRLELFYGKDGKVQCDSKWKSWYFNGIF) are cytoplasmic.

The protein belongs to the major facilitator superfamily. Sugar transporter (TC 2.A.1.1) family.

The protein resides in the membrane. High-affinity transporter for external inorganic phosphate. The polypeptide is Putative inorganic phosphate transporter C8E4.01c (Schizosaccharomyces pombe (strain 972 / ATCC 24843) (Fission yeast)).